The chain runs to 449 residues: Tubulin alpha-8 chain (449 aa).

Residues 1–4 (MREC) carry the MREC motif motif. Residues glutamine 11, glutamate 71, serine 140, glycine 144, threonine 145, threonine 179, asparagine 206, and asparagine 228 each coordinate GTP. Mg(2+) is bound at residue glutamate 71. Glutamate 254 is a catalytic residue.

It belongs to the tubulin family. Dimer of alpha and beta chains. A typical microtubule is a hollow water-filled tube with an outer diameter of 25 nm and an inner diameter of 15 nM. Alpha-beta heterodimers associate head-to-tail to form protofilaments running lengthwise along the microtubule wall with the beta-tubulin subunit facing the microtubule plus end conferring a structural polarity. Microtubules usually have 13 protofilaments but different protofilament numbers can be found in some organisms and specialized cells. Requires Mg(2+) as cofactor. In terms of processing, some glutamate residues at the C-terminus are polyglycylated, resulting in polyglycine chains on the gamma-carboxyl group. Glycylation is mainly limited to tubulin incorporated into axonemes (cilia and flagella) whereas glutamylation is prevalent in neuronal cells, centrioles, axonemes, and the mitotic spindle. Both modifications can coexist on the same protein on adjacent residues, and lowering polyglycylation levels increases polyglutamylation, and reciprocally. Cilia and flagella glycylation is required for their stability and maintenance. Flagella glycylation controls sperm motility. Post-translationally, some glutamate residues at the C-terminus are polyglutamylated, resulting in polyglutamate chains on the gamma-carboxyl group. Polyglutamylation plays a key role in microtubule severing by spastin (SPAST). SPAST preferentially recognizes and acts on microtubules decorated with short polyglutamate tails: severing activity by SPAST increases as the number of glutamates per tubulin rises from one to eight, but decreases beyond this glutamylation threshold. Glutamylation is also involved in cilia motility. The C-terminal phenylalanine residue is cleaved by MATCAP1/KIAA0895L.

It is found in the cytoplasm. The protein resides in the cytoskeleton. It catalyses the reaction GTP + H2O = GDP + phosphate + H(+). Its function is as follows. Tubulin is the major constituent of microtubules, a cylinder consisting of laterally associated linear protofilaments composed of alpha- and beta-tubulin heterodimers. Microtubules grow by the addition of GTP-tubulin dimers to the microtubule end, where a stabilizing cap forms. Below the cap, tubulin dimers are in GDP-bound state, owing to GTPase activity of alpha-tubulin. This chain is Tubulin alpha-8 chain (Tuba8), found in Rattus norvegicus (Rat).